A 162-amino-acid chain; its full sequence is Cytochrome c-type biogenesis protein CcmE (162 aa).

Over 1-8 (MNPVRKKR) the chain is Cytoplasmic. The helical; Signal-anchor for type II membrane protein transmembrane segment at 9 to 29 (LIIVLAIVAGVGAAVGLALSA) threads the bilayer. At 30-162 (LQQNINLFYT…GETSYNQEGK (133 aa)) the chain is on the periplasmic side. Histidine 124 and tyrosine 128 together coordinate heme. The segment covering 139–148 (DSGQLKHYEN) has biased composition (basic and acidic residues). Residues 139–162 (DSGQLKHYENGKAAGETSYNQEGK) are disordered.

The protein belongs to the CcmE/CycJ family.

Its subcellular location is the cell inner membrane. Heme chaperone required for the biogenesis of c-type cytochromes. Transiently binds heme delivered by CcmC and transfers the heme to apo-cytochromes in a process facilitated by CcmF and CcmH. The polypeptide is Cytochrome c-type biogenesis protein CcmE (Pseudomonas aeruginosa (strain ATCC 15692 / DSM 22644 / CIP 104116 / JCM 14847 / LMG 12228 / 1C / PRS 101 / PAO1)).